We begin with the raw amino-acid sequence, 457 residues long: 6-phosphofructo-2-kinase/fructose-2,6-bisphosphatase (457 aa).

Residues 1-20 form a disordered region; it reads MEIPPGLETTKRKVAHSDEH. The segment at 1 to 244 is 6-phosphofructo-2-kinase; sequence MEIPPGLETT…VYFLMNIHLL (244 aa). Basic and acidic residues predominate over residues 9–20; the sequence is TTKRKVAHSDEH. Residue 36 to 44 coordinates ATP; sequence GLPARGKTY. Beta-D-fructose 6-phosphate is bound by residues Arg-69 and Arg-98. Asp-124 is a catalytic residue. The beta-D-fructose 6-phosphate site is built by Thr-126 and Arg-132. The active site involves Cys-154. 163 to 168 contacts ATP; sequence NVTDVK. Positions 168, 190, and 194 each coordinate beta-D-fructose 6-phosphate. Residues 245-457 form a fructose-2,6-bisphosphatase region; it reads PRSIYLTRHG…QLPLCDSPRD (213 aa). Arg-252 is a beta-D-fructose 2,6-bisphosphate binding site. Residue His-253 is the Tele-phosphohistidine intermediate of the active site. Positions 259 and 265 each coordinate beta-D-fructose 2,6-bisphosphate. Glu-324 (proton donor/acceptor) is an active-site residue. Positions 335, 349, 353, 364, 390, and 394 each coordinate beta-D-fructose 2,6-bisphosphate. 346 to 349 lines the ATP pocket; the sequence is ADDR. ATP-binding positions include 390 to 394 and Tyr-426; that span reads QAVLR.

The protein in the C-terminal section; belongs to the phosphoglycerate mutase family.

It carries out the reaction beta-D-fructose 2,6-bisphosphate + H2O = beta-D-fructose 6-phosphate + phosphate. The enzyme catalyses beta-D-fructose 6-phosphate + ATP = beta-D-fructose 2,6-bisphosphate + ADP + H(+). Synthesis and degradation of fructose 2,6-bisphosphate. The chain is 6-phosphofructo-2-kinase/fructose-2,6-bisphosphatase from Caenorhabditis elegans.